The sequence spans 364 residues: MKVGDRHYHTIWLNEDGRSVDIIDQRWLPHDLRVVTLKTVADVALAIRDMWVRGAPLIGVTAAYGVAIAMTKDPSDAHLDAVWDELHQTRPTAINLRWALDAMRDHLRPLPEAGRADAAYQRATEIAEEDIELNRAIGANGLKVIRQIAAKKKPGEPVRILTHCNAGWLATVDYGTATAPIYMAVEEGIPVHVYVDETRPRNQGAYLTAWEMSSHGVPHTLIVDNAGGHLMQHGDVDLVIVGTDRTTANGDVCNKIGTYLKALAARDNGVPFYVALPSPTIDWTVHDGVKEIPIEERPGDEVSFVQGRASDGSIASVRISPEGSPAANPAFDVTPARLITGLITERGIATPSPEGLKALFPERR.

Substrate-binding positions include 53 to 55 (RGA), Arg-90, and Gln-203. The active-site Proton donor is the Asp-244. Substrate is bound at residue 254-255 (NK).

It belongs to the eIF-2B alpha/beta/delta subunits family. MtnA subfamily.

The enzyme catalyses 5-(methylsulfanyl)-alpha-D-ribose 1-phosphate = 5-(methylsulfanyl)-D-ribulose 1-phosphate. The protein operates within amino-acid biosynthesis; L-methionine biosynthesis via salvage pathway; L-methionine from S-methyl-5-thio-alpha-D-ribose 1-phosphate: step 1/6. Catalyzes the interconversion of methylthioribose-1-phosphate (MTR-1-P) into methylthioribulose-1-phosphate (MTRu-1-P). This chain is Methylthioribose-1-phosphate isomerase, found in Rhizobium meliloti (strain 1021) (Ensifer meliloti).